A 581-amino-acid chain; its full sequence is Transcription activator GAGA (581 aa).

Positions 34 to 99 (VDCTLAAGGR…VYRGEVSVDH (66 aa)) constitute a BTB domain. The interval 201–397 (VIQAFLPARK…SSGSGSGALS (197 aa)) is interaction with E(bx). At threonine 237 the chain carries Phosphothreonine. Disordered regions lie at residues 298–343 (ITPA…EQPA) and 364–404 (LRHF…SVPQ). The C2H2-type; degenerate zinc-finger motif lies at 343 to 366 (ATCPICYAVIRQSRNLRRHLELRH). Positions 381–401 (GKKSSSGSSGSGSGALSSSGS) are enriched in low complexity.

In terms of assembly, interacts with Bin1, lolal, corto, ttk and ph-p. Interacts with FACT subunits Ssrp and dre4/SPT16. Interacts with E(bx). Upon ecdysone stimulation, interacts with Nup98. Post-translationally, the N-terminus is blocked. As to expression, expressed in the central nervous system throughout development.

It localises to the nucleus. The protein resides in the chromosome. Its function is as follows. Transcriptional activator that functions by regulating chromatin structure. Overcomes the repressive effects of chromatin by promoting the open chromatin conformation in promoter gene regions, thereby allowing access to other transcription factors. Binds to DNA Polycomb response elements (PREs) at the bithorax complex and to the proximal region of the engrailed promoter, and positively regulates transcription of many genes including homeotic ones. Involved in zygotic genome activation (ZGA), a critical event in early embryonic development during which the developmental control passes from maternally provided mRNAs to the expression of the zygotic genome after fertilization. Binds to the DNA sequence (GA)n, with optimal binding to the pentamer 5'-GAGAG-3'. Binds DNA as an oligomer. May also act as a transcriptional repressor, maintaining the repressed state of genes including lolal, and down-regulating its own transcription. Required for dosage compensation in males and may be involved in oogenesis. Also has a role in nuclear division. This Drosophila melanogaster (Fruit fly) protein is Transcription activator GAGA (Trl).